Reading from the N-terminus, the 100-residue chain is MQLSPQEKDKLLIFTAFLVAERRKNKGLKLNYPEAVAYISGLILEGAREGKLVAELMSEGQTWLTRDDVMAGVAEMVDEVQVEATFPDGTKLVTIHNPIQ.

This sequence belongs to the urease gamma subunit family. In terms of assembly, heterotrimer of UreA (gamma), UreB (beta) and UreC (alpha) subunits. Three heterotrimers associate to form the active enzyme.

It is found in the cytoplasm. The enzyme catalyses urea + 2 H2O + H(+) = hydrogencarbonate + 2 NH4(+). Its pathway is nitrogen metabolism; urea degradation; CO(2) and NH(3) from urea (urease route): step 1/1. The sequence is that of Urease subunit gamma from Picosynechococcus sp. (strain ATCC 27264 / PCC 7002 / PR-6) (Agmenellum quadruplicatum).